Reading from the N-terminus, the 1357-residue chain is Vascular endothelial growth factor receptor 2 (1357 aa).

Residues 1 to 22 (MAKTSYALLLLDILLTFNVAKA) form the signal peptide. Over 23-774 (IELRFVPDPP…GAEEKMNVEL (752 aa)) the chain is Extracellular. Ig-like C2-type domains lie at 32-120 (PTLN…SVAV), 120-222 (VYVF…VAVV), 216-330 (PYIV…ASLI), 335-426 (PFIA…RTFQ), 433-553 (PRIF…VIVF), 556-667 (TRFL…LLHN), and 676-762 (SRIV…ARIS). N-linked (GlcNAc...) asparagine glycosylation is found at asparagine 35, asparagine 44, asparagine 66, asparagine 97, asparagine 161, asparagine 209, asparagine 247, asparagine 272, asparagine 303, asparagine 307, asparagine 407, asparagine 501, asparagine 560, asparagine 621, asparagine 631, asparagine 640, asparagine 681, asparagine 688, and asparagine 713. 2 disulfide bridges follow: cysteine 53–cysteine 104 and cysteine 153–cysteine 203. Cysteine 248 and cysteine 314 form a disulfide bridge. A disulfide bridge connects residues cysteine 457 and cysteine 538. Cysteine 579 and cysteine 651 are joined by a disulfide. A disulfide bridge links cysteine 697 with cysteine 746. The helical transmembrane segment at 775 to 795 (IMPIGAVVIAMFLWLLIVFVI) threads the bilayer. Residues 796–1357 (RNRKRPNDGD…AEVRYSAPPV (562 aa)) are Cytoplasmic-facing. A Protein kinase domain is found at 843–1173 (LKLGEPLGRG…FTQLVEHLGN (331 aa)). Residues 849 to 857 (LGRGAFGQV) and lysine 877 each bind ATP. Residues 944 to 975 (YSPYKKRTPRMPNRREVQQDEDPREGDLGLGT) are disordered. Aspartate 1039 (proton acceptor) is an active-site residue. Residues tyrosine 1065, tyrosine 1070, tyrosine 1186, and tyrosine 1222 each carry the phosphotyrosine; by autocatalysis modification. The segment at 1296-1357 (SLASESSNQT…AEVRYSAPPV (62 aa)) is disordered. The segment covering 1298–1312 (ASESSNQTSGYQSGY) has biased composition (polar residues).

The protein belongs to the protein kinase superfamily. Tyr protein kinase family. CSF-1/PDGF receptor subfamily. In terms of assembly, interacts with isoform VEGF165 of vegfaa and, to a lesser extent, with isoform VEGF171 of vegfab. Interacts (via juxtamembrane region) with chaperone pdcl3 (via thioredoxin fold region); the interaction leads to increased vegfr2 abundance through inhibition of its ubiquitination and degradation. First expressed in embryos between 5- and 7-somites in the bilateral stripes that contain the developing angioblasts, and then localized to the intermediate cell mass (ICM) and the developing vasculature. By 30 hpf, expressed in the major trunk, head and intersomitic vessels, persisting through 4 dpf when expression is seen in developing subintestinal veins and in the remaining vasculature.

The protein resides in the cell membrane. Its subcellular location is the cytoplasm. The protein localises to the nucleus. It is found in the cytoplasmic vesicle. It localises to the early endosome. The protein resides in the cell junction. Its subcellular location is the endoplasmic reticulum. The catalysed reaction is L-tyrosyl-[protein] + ATP = O-phospho-L-tyrosyl-[protein] + ADP + H(+). Receptor for VEGF or VEGFC. Has a tyrosine-protein kinase activity. Combinations of multiple VEGF receptors are required for development of different blood vessel types in the embryo. Involved in angiogenesis, specifically in VEGF-induced sprouting of new blood vessels. Particularly involved in artery formation. Does not appear to be required for hematopoiesis. This Danio rerio (Zebrafish) protein is Vascular endothelial growth factor receptor 2.